The following is a 421-amino-acid chain: Fumarylacetoacetase (421 aa).

Residue Asp131 coordinates Ca(2+). The active-site Proton acceptor is the His138. Residue Arg147 participates in substrate binding. Residues Glu204, Glu206, and Asp238 each coordinate Ca(2+). Residue Asp238 participates in Mg(2+) binding. The substrate site is built by Gln245 and Tyr249. Mg(2+) contacts are provided by Lys258 and Thr262. Thr355 is a binding site for substrate.

It belongs to the FAH family. Ca(2+) is required as a cofactor. Requires Mg(2+) as cofactor.

The catalysed reaction is 4-fumarylacetoacetate + H2O = acetoacetate + fumarate + H(+). The protein operates within amino-acid degradation; L-phenylalanine degradation; acetoacetate and fumarate from L-phenylalanine: step 6/6. Converts fumarylacetoacetate to acetoacetate and fumarate. Involved in tyrosine catabolic pathway. Catalyzes the final step in the tyrosine degradation pathway. The sequence is that of Fumarylacetoacetase from Arabidopsis thaliana (Mouse-ear cress).